Reading from the N-terminus, the 145-residue chain is Natriuretic peptides A (145 aa).

The first 23 residues, 1 to 23, serve as a signal peptide directing secretion; sequence MGTSFVGYLTFVLLLLALTKVRG. The propeptide occupies 24 to 117; the sequence is GPAYNSPLSS…KLRELLNAPR (94 aa). A disulfide bridge links Cys-125 with Cys-141.

This sequence belongs to the natriuretic peptide family. In terms of processing, cleaved upon secretion to produce the functional hormone.

Its subcellular location is the secreted. In terms of biological role, hormone playing a key role in cardiovascular homeostasis through regulation of natriuresis, diuresis, and vasodilation. Has a cGMP-stimulating activity. The polypeptide is Natriuretic peptides A (Aquarana catesbeiana (American bullfrog)).